A 290-amino-acid chain; its full sequence is Potassium-transporting ATPase subunit beta (290 aa).

The Cytoplasmic portion of the chain corresponds to 1–36 (MAALQEKKSCSQRMEEFQRYCWNPDTGQMLGRTLSR). Residues 37 to 57 (WVWISLYYVAFYVVMTGIFAL) form a helical; Signal-anchor for type II membrane protein membrane-spanning segment. The Extracellular segment spans residues 58 to 290 (CIYTLMCTLD…KVEFKLTIQQ (233 aa)). Residues asparagine 99, asparagine 103, asparagine 130, asparagine 146, and asparagine 161 are each glycosylated (N-linked (GlcNAc...) asparagine). A disulfide bond links cysteine 131 and cysteine 152. Cysteine 162 and cysteine 178 form a disulfide bridge. Asparagine 193 and asparagine 221 each carry an N-linked (GlcNAc...) asparagine glycan. An immunoglobulin-like region spans residues 194 to 290 (STAPRADCTF…KVEFKLTIQQ (97 aa)). A disulfide bond links cysteine 201 and cysteine 262.

Belongs to the X(+)/potassium ATPases subunit beta family. As to quaternary structure, the ATPase pump is composed of two subunits: alpha (catalytic) and beta (regulatory). Interacts with alpha subunit ATP12A; this interaction is required for the formation of a functionally active pump and targeting at the plasma membrane. Interacts (via N-terminus) with alpha subunit ATP4A (via the P-domain). Post-translationally, N-glycosylation is necessary for assembly and functional expression of the pump at the plasma membrane.

Its subcellular location is the apical cell membrane. The protein localises to the cell membrane. Functionally, the beta subunit of the gastric H(+)/K(+) ATPase pump which transports H(+) ions in exchange for K(+) ions across the apical membrane of parietal cells. Plays a structural and regulatory role in the assembly and membrane targeting of a functionally active pump. Within a transport cycle, the transfer of a H(+) ion across the membrane is coupled to ATP hydrolysis and is associated with a transient phosphorylation of the alpha subunit that shifts the pump conformation from inward-facing (E1) to outward-facing state (E2). Interacts with the phosphorylation domain of the alpha subunit and functions as a ratchet, stabilizing the lumenal-open E2 conformation and preventing the reverse reaction of the transport cycle. The chain is Potassium-transporting ATPase subunit beta (ATP4B) from Canis lupus familiaris (Dog).